The chain runs to 365 residues: Ribosomal RNA large subunit methyltransferase F (365 aa).

Low complexity-rich tracts occupy residues Met1–Gly18 and Ala30–Lys42. The tract at residues Met1–Lys50 is disordered.

The protein belongs to the methyltransferase superfamily. METTL16/RlmF family.

The protein resides in the cytoplasm. The enzyme catalyses adenosine(1618) in 23S rRNA + S-adenosyl-L-methionine = N(6)-methyladenosine(1618) in 23S rRNA + S-adenosyl-L-homocysteine + H(+). In terms of biological role, specifically methylates the adenine in position 1618 of 23S rRNA. In Shewanella oneidensis (strain ATCC 700550 / JCM 31522 / CIP 106686 / LMG 19005 / NCIMB 14063 / MR-1), this protein is Ribosomal RNA large subunit methyltransferase F.